The following is a 342-amino-acid chain: Phenylalanine--tRNA ligase alpha subunit (342 aa).

Mg(2+) is bound at residue E257.

The protein belongs to the class-II aminoacyl-tRNA synthetase family. Phe-tRNA synthetase alpha subunit type 1 subfamily. Tetramer of two alpha and two beta subunits. It depends on Mg(2+) as a cofactor.

It is found in the cytoplasm. The catalysed reaction is tRNA(Phe) + L-phenylalanine + ATP = L-phenylalanyl-tRNA(Phe) + AMP + diphosphate + H(+). This is Phenylalanine--tRNA ligase alpha subunit from Chlamydia trachomatis serovar A (strain ATCC VR-571B / DSM 19440 / HAR-13).